We begin with the raw amino-acid sequence, 299 residues long: Oxygen-dependent coproporphyrinogen-III oxidase (299 aa).

Substrate is bound at residue Ser-92. His-96 and His-106 together coordinate Mn(2+). Residue His-106 is the Proton donor of the active site. Residue 108 to 110 coordinates substrate; sequence NVR. Mn(2+) contacts are provided by His-145 and His-175. The interval 240-275 is important for dimerization; sequence YVEFNLVWDRGTLFGLQTGGRTESILMSMPPLVRWE. 258-260 is a binding site for substrate; sequence GGR.

Belongs to the aerobic coproporphyrinogen-III oxidase family. As to quaternary structure, homodimer. Mn(2+) is required as a cofactor.

Its subcellular location is the cytoplasm. The enzyme catalyses coproporphyrinogen III + O2 + 2 H(+) = protoporphyrinogen IX + 2 CO2 + 2 H2O. Its pathway is porphyrin-containing compound metabolism; protoporphyrin-IX biosynthesis; protoporphyrinogen-IX from coproporphyrinogen-III (O2 route): step 1/1. Functionally, involved in the heme biosynthesis. Catalyzes the aerobic oxidative decarboxylation of propionate groups of rings A and B of coproporphyrinogen-III to yield the vinyl groups in protoporphyrinogen-IX. The sequence is that of Oxygen-dependent coproporphyrinogen-III oxidase from Escherichia coli O7:K1 (strain IAI39 / ExPEC).